We begin with the raw amino-acid sequence, 634 residues long: Chaperone protein HtpG (634 aa).

The segment at 1–342 (MTVDTDKQTL…SSDLSLNVSR (342 aa)) is a; substrate-binding. The segment at 343 to 559 (EILQSGPVVD…QGDLGLQMRQ (217 aa)) is b. A c region spans residues 560 to 634 (LLEASGQAVP…LNKLLLELSV (75 aa)).

It belongs to the heat shock protein 90 family. In terms of assembly, homodimer.

It is found in the cytoplasm. Molecular chaperone. Has ATPase activity. The polypeptide is Chaperone protein HtpG (Xanthomonas oryzae pv. oryzae (strain MAFF 311018)).